We begin with the raw amino-acid sequence, 993 residues long: Muscular LMNA-interacting protein (993 aa).

The segment at 1 to 51 (MLSEQGLLSDCGNNYFQMTSCILSGSIQTTPQVSAGGSEAKPLIFTFVPTV) is interaction with LMNA. The segment at 71–90 (PEESSDKSPETVNRSKSNDY) is disordered. Residues 80 to 90 (ETVNRSKSNDY) are compositionally biased toward polar residues. Position 146 is a phosphoserine (serine 146). Disordered regions lie at residues 152–171 (AASRKVEQGPPGGIGTAAVR), 186–225 (VRPKTQGTDLKTSSHPEMLHGMAPQQKHGQLTSSPTTSEQ), 231–250 (PAFSFVSPTNPNTPPDPVNL), 300–322 (PHSTQLSGSNLPSSTAADPKPGL), 334–358 (SHVLSHGESPRTSSSPPSSSASLKS), 443–481 (SPASSTLTLDQKEKQTPPTPKKSLSSCSLRAGSPDQGEL), 500–582 (TPLS…IHTY), 677–711 (SALHPHCGSGTLPSRLGKSESTTPNHRSPVSTPSL), and 811–864 (LSMH…SQLT). Residues 161-837 (PPGGIGTAAV…GSDTVKTPTT (677 aa)) form a required for interaction with ISL1 region. Residues 212-225 (KHGQLTSSPTTSEQ) are compositionally biased toward polar residues. Positions 300 to 315 (PHSTQLSGSNLPSSTA) are enriched in polar residues. The segment covering 343–358 (PRTSSSPPSSSASLKS) has biased composition (low complexity). The segment covering 500 to 532 (TPLSQAPSLSPTKQASSSLASMNVERTPSPTLK) has biased composition (polar residues). The span at 533-563 (SNTMLSLLQTSTSSSVGLPPVPPSSSLSSLK) shows a compositional bias: low complexity. Residues 564-574 (SKQDGDLRGPE) show a composition bias toward basic and acidic residues. The span at 695–711 (SESTTPNHRSPVSTPSL) shows a compositional bias: polar residues. Low complexity predominate over residues 811–822 (LSMHSSDSPSRS). Position 818 is a phosphoserine (serine 818). A compositionally biased stretch (polar residues) spans 849 to 864 (ANLSSPSSTVSESQLT).

As to quaternary structure, directly interacts with LMNA. Interacts with ISL1 (via N-terminal domain); the interaction represses ISL1 transactivator activity. Interactions of ISL1 with MLIP1 and GCN5/KAT2A may be mutually exclusive. As to expression, predominantly expressed in the heart and skeletal muscle. Also detected in liver. In terms of tissue distribution, expressed in skeletal muscle.

The protein resides in the nucleus. It is found in the nucleus envelope. It localises to the PML body. The protein localises to the cytoplasm. Its subcellular location is the cytosol. The protein resides in the cell membrane. It is found in the sarcolemma. Functionally, required for myoblast differentiation into myotubes, possibly acting as a transcriptional regulator of the myogenic program. Required for cardiac adaptation to stress through integrated regulation of the AKT/mTOR pathways and FOXO1. Regulates cardiac homeostasis and plays a role in the protection against cardiac hypertrophy. Binds chromatin. May act as a transcriptional cofactor for ISL1, repressing its transcriptional activity. May also repress MYOCD transcriptional activity. The sequence is that of Muscular LMNA-interacting protein from Homo sapiens (Human).